Consider the following 453-residue polypeptide: Cytochrome b-c1 complex subunit 2, mitochondrial (453 aa).

Residues 1–14 constitute a mitochondrion transit peptide; it reads MKLLTRAGSLSRFY. N6-acetyllysine occurs at positions 66, 199, and 250.

The protein belongs to the peptidase M16 family. UQCRC2/QCR2 subfamily. As to quaternary structure, component of the ubiquinol-cytochrome c oxidoreductase (cytochrome b-c1 complex, complex III, CIII), a multisubunit enzyme composed of 11 subunits. The complex is composed of 3 respiratory subunits cytochrome b, cytochrome c1 and Rieske protein UQCRFS1, 2 core protein subunits UQCRC1/QCR1 and UQCRC2/QCR2, and 6 low-molecular weight protein subunits UQCRH/QCR6, UQCRB/QCR7, UQCRQ/QCR8, UQCR10/QCR9, UQCR11/QCR10 and subunit 9, the cleavage product of Rieske protein UQCRFS1. The complex exists as an obligatory dimer and forms supercomplexes (SCs) in the inner mitochondrial membrane with NADH-ubiquinone oxidoreductase (complex I, CI) and cytochrome c oxidase (complex IV, CIV), resulting in different assemblies (supercomplex SCI(1)III(2)IV(1) and megacomplex MCI(2)III(2)IV(2)). Interacts with RAB5IF. Interacts with STMP1.

The protein localises to the mitochondrion inner membrane. Functionally, component of the ubiquinol-cytochrome c oxidoreductase, a multisubunit transmembrane complex that is part of the mitochondrial electron transport chain which drives oxidative phosphorylation. The respiratory chain contains 3 multisubunit complexes succinate dehydrogenase (complex II, CII), ubiquinol-cytochrome c oxidoreductase (cytochrome b-c1 complex, complex III, CIII) and cytochrome c oxidase (complex IV, CIV), that cooperate to transfer electrons derived from NADH and succinate to molecular oxygen, creating an electrochemical gradient over the inner membrane that drives transmembrane transport and the ATP synthase. The cytochrome b-c1 complex catalyzes electron transfer from ubiquinol to cytochrome c, linking this redox reaction to translocation of protons across the mitochondrial inner membrane, with protons being carried across the membrane as hydrogens on the quinol. In the process called Q cycle, 2 protons are consumed from the matrix, 4 protons are released into the intermembrane space and 2 electrons are passed to cytochrome c. The 2 core subunits UQCRC1/QCR1 and UQCRC2/QCR2 are homologous to the 2 mitochondrial-processing peptidase (MPP) subunits beta-MPP and alpha-MPP respectively, and they seem to have preserved their MPP processing properties. May be involved in the in situ processing of UQCRFS1 into the mature Rieske protein and its mitochondrial targeting sequence (MTS)/subunit 9 when incorporated into complex III. The sequence is that of Cytochrome b-c1 complex subunit 2, mitochondrial (UQCRC2) from Bos taurus (Bovine).